The following is a 159-amino-acid chain: Ribosomal RNA large subunit methyltransferase H (159 aa).

Residues Leu76, Gly108, and 127 to 132 (FGLLTF) each bind S-adenosyl-L-methionine.

Belongs to the RNA methyltransferase RlmH family. In terms of assembly, homodimer.

The protein resides in the cytoplasm. It carries out the reaction pseudouridine(1915) in 23S rRNA + S-adenosyl-L-methionine = N(3)-methylpseudouridine(1915) in 23S rRNA + S-adenosyl-L-homocysteine + H(+). Specifically methylates the pseudouridine at position 1915 (m3Psi1915) in 23S rRNA. The chain is Ribosomal RNA large subunit methyltransferase H from Streptococcus thermophilus (strain ATCC BAA-491 / LMD-9).